Here is a 62-residue protein sequence, read N- to C-terminus: Inner membrane protein p12 (62 aa).

Residues 16–36 (LLIVAIVVVIMAIMLYYFWWM) form a helical membrane-spanning segment.

The protein belongs to the asfivirus inner membrane protein p12 family. As to quaternary structure, homomultimer; disulfide-linked. Not glycosylated.

It localises to the virion membrane. The polypeptide is Inner membrane protein p12 (African swine fever virus (isolate Pig/Kenya/KEN-50/1950) (ASFV)).